A 405-amino-acid polypeptide reads, in one-letter code: Aspartic protease (405 aa).

The signal sequence occupies residues 1 to 21; it reads MISDTVIAILAVALVGSTVQA. The propeptide at 22 to 81 is removed in mature form; sequence APVDATATSTSGIIAVPISKSAAQLAREADPVVSLDWLKKTKAQAQYKHKQANARLHSKR. The Peptidase A1 domain occupies 97–402; sequence WTGPITIGGQ…DVGNARVGFA (306 aa). Aspartate 113 is an active-site residue. Residues cysteine 126 and cysteine 131 are joined by a disulfide bond. Aspartate 290 is a catalytic residue. Cysteine 332 and cysteine 366 are disulfide-bonded.

Belongs to the peptidase A1 family.

It is found in the secreted. Inhibited by pepstatin A. In terms of biological role, possesses acidic protease activity. Hydrolyzes casein and azoalbumin in vitro. This chain is Aspartic protease, found in Phaffia rhodozyma (Yeast).